The following is a 560-amino-acid chain: Phenylalanine--tRNA ligase beta subunit (560 aa).

One can recognise a B5 domain in the interval 279 to 354; that stretch reads LTPKEFEVDL…IAYGYNNIEP (76 aa). 4 residues coordinate Mg(2+): aspartate 332, aspartate 338, glutamate 341, and aspartate 342.

Belongs to the phenylalanyl-tRNA synthetase beta subunit family. Type 2 subfamily. As to quaternary structure, tetramer of two alpha and two beta subunits. Requires Mg(2+) as cofactor.

The protein resides in the cytoplasm. It carries out the reaction tRNA(Phe) + L-phenylalanine + ATP = L-phenylalanyl-tRNA(Phe) + AMP + diphosphate + H(+). This is Phenylalanine--tRNA ligase beta subunit from Thermococcus sibiricus (strain DSM 12597 / MM 739).